We begin with the raw amino-acid sequence, 114 residues long: Cystatin Pr17a (114 aa).

Positions 1–18 (MSCLKIITLFLFLAAVIA) are cleaved as a signal peptide. Residues 31–109 (GAPEQINPND…QAWLKKTSVK (79 aa)) form the Cystatin domain. Cysteine 93 and cysteine 113 form a disulfide bridge.

The protein belongs to the cystatin family. As to expression, expressed by the venom gland (posterior main gland) (at protein level).

The protein localises to the secreted. In Platymeris rhadamanthus (Red spot assassin bug), this protein is Cystatin Pr17a.